The chain runs to 589 residues: Probable peptidoglycan D,D-transpeptidase FtsI (589 aa).

A helical membrane pass occupies residues 47 to 67 (IFLVMGFFGFCFVGVSLGAGW). Serine 296 functions as the Acyl-ester intermediate in the catalytic mechanism.

This sequence belongs to the transpeptidase family. As to quaternary structure, interacts with FtsN and FtsW.

It is found in the cell inner membrane. The catalysed reaction is Preferential cleavage: (Ac)2-L-Lys-D-Ala-|-D-Ala. Also transpeptidation of peptidyl-alanyl moieties that are N-acyl substituents of D-alanine.. It participates in cell wall biogenesis; peptidoglycan biosynthesis. Its function is as follows. Catalyzes cross-linking of the peptidoglycan cell wall at the division septum. This chain is Probable peptidoglycan D,D-transpeptidase FtsI (ftsI), found in Caulobacter vibrioides (strain NA1000 / CB15N) (Caulobacter crescentus).